The following is a 544-amino-acid chain: Putative ligase Rv1013 (544 aa).

Lysine 528 is covalently cross-linked (Isoglutamyl lysine isopeptide (Lys-Gln) (interchain with Q-Cter in protein Pup)).

Belongs to the ATP-dependent AMP-binding enzyme family. Post-translationally, pupylated at Lys-528 by the prokaryotic ubiquitin-like protein Pup, which probably leads to its degradation by the proteasome.

The polypeptide is Putative ligase Rv1013 (pks16) (Mycobacterium tuberculosis (strain ATCC 25618 / H37Rv)).